A 392-amino-acid chain; its full sequence is GTPase Obg (392 aa).

An Obg domain is found at 1-159 (MKFVDEATIK…RELRLELLLL (159 aa)). Residues 160–333 (ADVGMLGLPN…VCNELSDFMD (174 aa)) form the OBG-type G domain. GTP contacts are provided by residues 166-173 (GLPNAGKS), 191-195 (FTTLI), 213-216 (DIPG), 283-286 (NKTD), and 314-316 (AAV). Residues Ser173 and Thr193 each coordinate Mg(2+). Residues 364-392 (GKNVVTEDGDDDDDWDDEEDDGHVIYARD) form a disordered region. Acidic residues predominate over residues 370–384 (EDGDDDDDWDDEEDD).

The protein belongs to the TRAFAC class OBG-HflX-like GTPase superfamily. OBG GTPase family. In terms of assembly, monomer. Mg(2+) is required as a cofactor.

It localises to the cytoplasm. An essential GTPase which binds GTP, GDP and possibly (p)ppGpp with moderate affinity, with high nucleotide exchange rates and a fairly low GTP hydrolysis rate. Plays a role in control of the cell cycle, stress response, ribosome biogenesis and in those bacteria that undergo differentiation, in morphogenesis control. This chain is GTPase Obg, found in Aliivibrio salmonicida (strain LFI1238) (Vibrio salmonicida (strain LFI1238)).